The following is a 578-amino-acid chain: MALYRKYRPASFAEVVGQEHVTAPLSVALDAGRINHAYLFSGPRGCGKTSSARILARSLNCAQGPTANPCGVCESCVSLAPNAPGSIDVVELDAASHGGVDDTRELRDRAFYAPVQSRYRVFIVDEAHMVTTAGFNALLKIVEEPPEHLIFIFATTEPEKVLPTIRSRTHHYPFRLLPPRTMRALLARICEQEGVVVDDAVYPLVIRAGGGSPRDTLSVLDQLLAGAADTHVTYTRALGLLGVTDVALIDDAVDALAACDAAALFGAIESVIDGGHDPRRFATDLLERFRDLIVLQSVPDAASRGVVDAPEDALDRMREQAARIGRATLTRYAEVVQAGLGEMRGATAPRLLLEVVCARLLLPSASDAESALLQRVERIETRLDMSIPAPQAVPRPSAAAAEPKHQPAREPRPVLAPTPASSEPTVAAVRSMWPTVRDKVRLRSRTTEVMLAGATVRALEDNTLVLTHESAPLARRLSEQRNADVLAEALKDALGVNWRVRCETGEPAAAASPVGGGANVATAKAVNPAPTANSTQRDEEEHMLAEAGRGDPSPRRDPEEVALELLQNELGARRIDNA.

42–49 (GPRGCGKT) serves as a coordination point for ATP. Positions 61, 70, 73, and 76 each coordinate Zn(2+). Disordered stretches follow at residues 389 to 423 (APQA…ASSE) and 525 to 559 (AVNP…RDPE). Basic and acidic residues-rich tracts occupy residues 402–412 (EPKHQPAREPR) and 536–559 (QRDE…RDPE).

Belongs to the DnaX/STICHEL family. DNA polymerase III contains a core (composed of alpha, epsilon and theta chains) that associates with a tau subunit. This core dimerizes to form the POLIII' complex. PolIII' associates with the gamma complex (composed of gamma, delta, delta', psi and chi chains) and with the beta chain to form the complete DNA polymerase III complex.

The catalysed reaction is DNA(n) + a 2'-deoxyribonucleoside 5'-triphosphate = DNA(n+1) + diphosphate. In terms of biological role, DNA polymerase III is a complex, multichain enzyme responsible for most of the replicative synthesis in bacteria. This DNA polymerase also exhibits 3' to 5' exonuclease activity. This chain is DNA polymerase III subunit gamma/tau (dnaX), found in Mycobacterium bovis (strain ATCC BAA-935 / AF2122/97).